Consider the following 131-residue polypeptide: CLAVATA3/ESR (CLE)-related protein ESR1 (131 aa).

Residues 1–26 (MASRMGMVAIVSLFVCALAASTSVNA) form the signal peptide. The disordered stretch occupies residues 49 to 131 (RQQQQGGFIG…IGPPPLSDRY (83 aa)). Hydroxyproline is present on residues proline 81 and proline 84. Proline 84 carries an O-linked (Ara...) hydroxyproline glycan.

It belongs to the CLV3/ESR signal peptide family. In terms of processing, the O-glycosylation (arabinosylation) of the hydroxyproline Pro-84 enhances binding affinity of the ESR1p peptide for its receptor. As to expression, seed endosperm.

It is found in the secreted. The protein localises to the extracellular space. Functionally, extracellular signal peptide that regulates cell fate. This Zea mays (Maize) protein is CLAVATA3/ESR (CLE)-related protein ESR1.